A 156-amino-acid polypeptide reads, in one-letter code: Ribosomal RNA large subunit methyltransferase H (156 aa).

S-adenosyl-L-methionine is bound by residues leucine 73, glycine 104, and 123 to 128; that span reads LSKLTL.

Belongs to the RNA methyltransferase RlmH family. As to quaternary structure, homodimer.

The protein localises to the cytoplasm. It catalyses the reaction pseudouridine(1915) in 23S rRNA + S-adenosyl-L-methionine = N(3)-methylpseudouridine(1915) in 23S rRNA + S-adenosyl-L-homocysteine + H(+). In terms of biological role, specifically methylates the pseudouridine at position 1915 (m3Psi1915) in 23S rRNA. This is Ribosomal RNA large subunit methyltransferase H from Hydrogenovibrio crunogenus (strain DSM 25203 / XCL-2) (Thiomicrospira crunogena).